The primary structure comprises 480 residues: MAEANTPHIAIMPSPGMGHLIPFVELAKRLVQHDCFTVTMIISGETSPSKAQRSVLNSLPSSIASVFLPPADLSDVPSTARIETRAMLTMTRSNPALRELFGSLSTKKSLPAVLVVDMFGADAFDVAVDFHVSPYIFYASNANVLSFFLHLPKLDKTVSCEFRYLTEPLKIPGCVPITGKDFLDTVQDRNDDAYKLLLHNTKRYKEAKGILVNSFVDLESNAIKALQEPAPDKPTVYPIGPLVNTSSSNVNLEDKFGCLSWLDNQPFGSVLYISFGSGGTLTCEQFNELAIGLAESGKRFIWVIRSPSEIVSSSYFNPHSETDPFSFLPIGFLDRTKEKGLVVPSWAPQVQILAHPSTCGFLTHCGWNSTLESIVNGVPLIAWPLFAEQKMNTLLLVEDVGAALRIHAGEDGIVRREEVVRVVKALMEGEEGKAIGNKVKELKEGVVRVLGDDGLSSKSFGEVLLKWKTHQRDINQETSH.

UDP-alpha-D-glucose contacts are provided by residues S277, 347–349, 364–372, and 386–389; these read APQ, HCGWNSTLE, and FAEQ.

This sequence belongs to the UDP-glycosyltransferase family.

The chain is UDP-glycosyltransferase 72B2 (UGT72B2) from Arabidopsis thaliana (Mouse-ear cress).